The primary structure comprises 317 residues: Aspartate carbamoyltransferase catalytic subunit (317 aa).

Positions 55 and 56 each coordinate carbamoyl phosphate. Lysine 83 contributes to the L-aspartate binding site. Residues arginine 105, histidine 138, and glutamine 141 each coordinate carbamoyl phosphate. L-aspartate-binding residues include arginine 171 and arginine 225. Glycine 266 and proline 267 together coordinate carbamoyl phosphate.

Belongs to the aspartate/ornithine carbamoyltransferase superfamily. ATCase family. Heterododecamer (2C3:3R2) of six catalytic PyrB chains organized as two trimers (C3), and six regulatory PyrI chains organized as three dimers (R2).

It carries out the reaction carbamoyl phosphate + L-aspartate = N-carbamoyl-L-aspartate + phosphate + H(+). It participates in pyrimidine metabolism; UMP biosynthesis via de novo pathway; (S)-dihydroorotate from bicarbonate: step 2/3. Catalyzes the condensation of carbamoyl phosphate and aspartate to form carbamoyl aspartate and inorganic phosphate, the committed step in the de novo pyrimidine nucleotide biosynthesis pathway. The chain is Aspartate carbamoyltransferase catalytic subunit from Mycobacteroides abscessus (strain ATCC 19977 / DSM 44196 / CCUG 20993 / CIP 104536 / JCM 13569 / NCTC 13031 / TMC 1543 / L948) (Mycobacterium abscessus).